The sequence spans 385 residues: 3,5,7-trioxododecanoyl-CoA synthase (385 aa).

Cys-157 is a catalytic residue.

Belongs to the thiolase-like superfamily. Chalcone/stilbene synthases family. In terms of tissue distribution, expressed in bracts, flowers and young leaves. Not detected in mature leaves, roots and stems. Expressed in glandular trichomes.

The enzyme catalyses hexanoyl-CoA + 3 malonyl-CoA + 3 H(+) = 3,5,7-trioxododecanoyl-CoA + 3 CO2 + 3 CoA. It carries out the reaction 3,5,7-trioxododecanoyl-CoA = olivetol + CO2 + CoA. The protein operates within secondary metabolite biosynthesis; terpenoid biosynthesis. Its function is as follows. Involved in the biosynthesis of cannabinoids-related terpenophenolic natural products, which have pharmacological activity. Polyketide synthase responsible for olivetol biosynthesis, from a C(12)-polyketide, probably 3,5,7-trioxododecanoyl-CoA. Catalyzes the first step in the cannabinoids biosynthetic pathway. The preferred substrate is hexanoyl-CoA, but also accepts CoA esters with C4 to C8 aliphatic side chains. When using malonyl-CoA and hexanoyl-CoA as substrates, produces undetermined compounds distinct form olivetol or olivetolic acid that could be hexanoyl triacetic acid lactone (HTAL) and pentyl diacetic acid lactone (PDAL). Produces olivetolic acid when acting in concert with olivetolic acid cyclase (OAC). The sequence is that of 3,5,7-trioxododecanoyl-CoA synthase from Cannabis sativa (Hemp).